A 313-amino-acid chain; its full sequence is tRNA dimethylallyltransferase (313 aa).

11–18 (GPTACGKT) is an ATP binding site. 13-18 (TACGKT) is a substrate binding site. 3 interaction with substrate tRNA regions span residues 36–39 (DSAL), 160–164 (QRIGR), and 243–248 (RCVGYR).

The protein belongs to the IPP transferase family. Monomer. It depends on Mg(2+) as a cofactor.

It carries out the reaction adenosine(37) in tRNA + dimethylallyl diphosphate = N(6)-dimethylallyladenosine(37) in tRNA + diphosphate. Functionally, catalyzes the transfer of a dimethylallyl group onto the adenine at position 37 in tRNAs that read codons beginning with uridine, leading to the formation of N6-(dimethylallyl)adenosine (i(6)A). The chain is tRNA dimethylallyltransferase from Neisseria gonorrhoeae (strain ATCC 700825 / FA 1090).